The following is a 307-amino-acid chain: Methionyl-tRNA formyltransferase (307 aa).

Position 109–112 (109–112 (SLLP)) interacts with (6S)-5,6,7,8-tetrahydrofolate.

This sequence belongs to the Fmt family.

It catalyses the reaction L-methionyl-tRNA(fMet) + (6R)-10-formyltetrahydrofolate = N-formyl-L-methionyl-tRNA(fMet) + (6S)-5,6,7,8-tetrahydrofolate + H(+). Its function is as follows. Attaches a formyl group to the free amino group of methionyl-tRNA(fMet). The formyl group appears to play a dual role in the initiator identity of N-formylmethionyl-tRNA by promoting its recognition by IF2 and preventing the misappropriation of this tRNA by the elongation apparatus. In Mycobacteroides abscessus (strain ATCC 19977 / DSM 44196 / CCUG 20993 / CIP 104536 / JCM 13569 / NCTC 13031 / TMC 1543 / L948) (Mycobacterium abscessus), this protein is Methionyl-tRNA formyltransferase.